The following is a 700-amino-acid chain: Elongation factor G (700 aa).

The region spanning 8-290 (DRYRNVGIMA…AMIMYMPSPL (283 aa)) is the tr-type G domain. Residues 17–24 (AHIDAGKT), 88–92 (DTPGH), and 142–145 (NKMD) contribute to the GTP site.

It belongs to the TRAFAC class translation factor GTPase superfamily. Classic translation factor GTPase family. EF-G/EF-2 subfamily.

The protein resides in the cytoplasm. Functionally, catalyzes the GTP-dependent ribosomal translocation step during translation elongation. During this step, the ribosome changes from the pre-translocational (PRE) to the post-translocational (POST) state as the newly formed A-site-bound peptidyl-tRNA and P-site-bound deacylated tRNA move to the P and E sites, respectively. Catalyzes the coordinated movement of the two tRNA molecules, the mRNA and conformational changes in the ribosome. In Vesicomyosocius okutanii subsp. Calyptogena okutanii (strain HA), this protein is Elongation factor G.